A 79-amino-acid chain; its full sequence is Probable [Fe-S]-dependent transcriptional repressor (79 aa).

Positions 54, 59, 62, and 68 each coordinate iron-sulfur cluster.

Belongs to the FeoC family.

Its function is as follows. May function as a transcriptional regulator that controls feoABC expression. The chain is Probable [Fe-S]-dependent transcriptional repressor from Photorhabdus laumondii subsp. laumondii (strain DSM 15139 / CIP 105565 / TT01) (Photorhabdus luminescens subsp. laumondii).